The primary structure comprises 386 residues: S-adenosylmethionine synthase (386 aa).

His-16 provides a ligand contact to ATP. Asp-18 contributes to the Mg(2+) binding site. Glu-44 serves as a coordination point for K(+). L-methionine contacts are provided by Glu-57 and Gln-100. The segment at 100–110 is flexible loop; sequence QSRDIAQGVDR. ATP contacts are provided by residues 165–167, Asp-240, 246–247, Ala-263, and Lys-267; these read DAK and RK. Asp-240 contacts L-methionine. Position 271 (Lys-271) interacts with L-methionine.

This sequence belongs to the AdoMet synthase family. As to quaternary structure, homotetramer; dimer of dimers. The cofactor is Mg(2+). It depends on K(+) as a cofactor.

The protein localises to the cytoplasm. The catalysed reaction is L-methionine + ATP + H2O = S-adenosyl-L-methionine + phosphate + diphosphate. The protein operates within amino-acid biosynthesis; S-adenosyl-L-methionine biosynthesis; S-adenosyl-L-methionine from L-methionine: step 1/1. Its function is as follows. Catalyzes the formation of S-adenosylmethionine (AdoMet) from methionine and ATP. The overall synthetic reaction is composed of two sequential steps, AdoMet formation and the subsequent tripolyphosphate hydrolysis which occurs prior to release of AdoMet from the enzyme. The chain is S-adenosylmethionine synthase from Francisella tularensis subsp. holarctica (strain FTNF002-00 / FTA).